Consider the following 92-residue polypeptide: Putative pterin-4-alpha-carbinolamine dehydratase (92 aa).

Belongs to the pterin-4-alpha-carbinolamine dehydratase family.

It carries out the reaction (4aS,6R)-4a-hydroxy-L-erythro-5,6,7,8-tetrahydrobiopterin = (6R)-L-erythro-6,7-dihydrobiopterin + H2O. The chain is Putative pterin-4-alpha-carbinolamine dehydratase from Natronomonas pharaonis (strain ATCC 35678 / DSM 2160 / CIP 103997 / JCM 8858 / NBRC 14720 / NCIMB 2260 / Gabara) (Halobacterium pharaonis).